The chain runs to 394 residues: Queuine tRNA-ribosyltransferase (394 aa).

Residue Asp99 is the Proton acceptor of the active site. Residues 99–103, Asp153, Gln195, and Gly222 contribute to the substrate site; that span reads DSGGF. The tract at residues 253–259 is RNA binding; that stretch reads GVGHPED. Residue Asp272 is the Nucleophile of the active site. The segment at 277-281 is RNA binding; important for wobble base 34 recognition; the sequence is TRTGR. Zn(2+)-binding residues include Cys310, Cys312, Cys315, and His341.

It belongs to the queuine tRNA-ribosyltransferase family. Homodimer. Within each dimer, one monomer is responsible for RNA recognition and catalysis, while the other monomer binds to the replacement base PreQ1. Zn(2+) is required as a cofactor.

It carries out the reaction 7-aminomethyl-7-carbaguanine + guanosine(34) in tRNA = 7-aminomethyl-7-carbaguanosine(34) in tRNA + guanine. It participates in tRNA modification; tRNA-queuosine biosynthesis. Catalyzes the base-exchange of a guanine (G) residue with the queuine precursor 7-aminomethyl-7-deazaguanine (PreQ1) at position 34 (anticodon wobble position) in tRNAs with GU(N) anticodons (tRNA-Asp, -Asn, -His and -Tyr). Catalysis occurs through a double-displacement mechanism. The nucleophile active site attacks the C1' of nucleotide 34 to detach the guanine base from the RNA, forming a covalent enzyme-RNA intermediate. The proton acceptor active site deprotonates the incoming PreQ1, allowing a nucleophilic attack on the C1' of the ribose to form the product. After dissociation, two additional enzymatic reactions on the tRNA convert PreQ1 to queuine (Q), resulting in the hypermodified nucleoside queuosine (7-(((4,5-cis-dihydroxy-2-cyclopenten-1-yl)amino)methyl)-7-deazaguanosine). The protein is Queuine tRNA-ribosyltransferase of Deinococcus radiodurans (strain ATCC 13939 / DSM 20539 / JCM 16871 / CCUG 27074 / LMG 4051 / NBRC 15346 / NCIMB 9279 / VKM B-1422 / R1).